We begin with the raw amino-acid sequence, 275 residues long: NH(3)-dependent NAD(+) synthetase (275 aa).

50 to 57 (GISGGVDS) contributes to the ATP binding site. Aspartate 56 serves as a coordination point for Mg(2+). Arginine 147 contributes to the deamido-NAD(+) binding site. Threonine 167 provides a ligand contact to ATP. Glutamate 172 provides a ligand contact to Mg(2+). 2 residues coordinate deamido-NAD(+): lysine 180 and aspartate 187. Residues lysine 196 and threonine 218 each coordinate ATP. 267–268 (HK) is a binding site for deamido-NAD(+).

This sequence belongs to the NAD synthetase family. In terms of assembly, homodimer.

It carries out the reaction deamido-NAD(+) + NH4(+) + ATP = AMP + diphosphate + NAD(+) + H(+). Its pathway is cofactor biosynthesis; NAD(+) biosynthesis; NAD(+) from deamido-NAD(+) (ammonia route): step 1/1. Functionally, catalyzes the ATP-dependent amidation of deamido-NAD to form NAD. Uses ammonia as a nitrogen source. This is NH(3)-dependent NAD(+) synthetase from Stutzerimonas stutzeri (strain A1501) (Pseudomonas stutzeri).